Consider the following 630-residue polypeptide: Beta-phellandrene synthase, chloroplastic (630 aa).

Residues 1–48 (MALVSSAPKSCLHKSLIRSTHHELKPLRRTIPTLGMCRRGKSFTPSVS) constitute a chloroplast transit peptide. Residues Asp-381, Asp-385, and Asp-533 each contribute to the Mg(2+) site. The short motif at 381–385 (DDIYD) is the DDXXD motif element.

This sequence belongs to the terpene synthase family. Tpsd subfamily. It depends on Mg(2+) as a cofactor. The cofactor is Mn(2+). Requires K(+) as cofactor.

The protein localises to the plastid. Its subcellular location is the chloroplast. It carries out the reaction (2E)-geranyl diphosphate = (-)-beta-phellandrene + diphosphate. It functions in the pathway terpene metabolism; oleoresin biosynthesis. Converts geranyl diphosphate to four products with (-)-(4S)-beta-phellandrene (52%) as the major olefin, and lesser amounts of (-)-(1S,5S)-beta-pinene (34%), (-)-1S,5S-alpha-pinene (8.5%), and (-)-(4S)-limonene (6%). Involved in defensive oleoresin formation in conifers in response to insect attack or other injury. Involved in monoterpene (C10) olefins biosynthesis. The protein is Beta-phellandrene synthase, chloroplastic (ag8) of Abies grandis (Grand fir).